The chain runs to 561 residues: Chaperonin GroEL 1 (561 aa).

Residues 29-32 (TMGP), 86-90 (DGTTT), Gly-413, and Asp-495 each bind ATP.

Belongs to the chaperonin (HSP60) family. Forms a cylinder of 14 subunits composed of two heptameric rings stacked back-to-back. Interacts with the co-chaperonin GroES.

It is found in the cytoplasm. It carries out the reaction ATP + H2O + a folded polypeptide = ADP + phosphate + an unfolded polypeptide.. Its function is as follows. Together with its co-chaperonin GroES, plays an essential role in assisting protein folding. The GroEL-GroES system forms a nano-cage that allows encapsulation of the non-native substrate proteins and provides a physical environment optimized to promote and accelerate protein folding. The sequence is that of Chaperonin GroEL 1 from Trichodesmium erythraeum (strain IMS101).